The sequence spans 430 residues: Corticosteroid-binding globulin (430 aa).

The first 22 residues, 1–22 (MLLTLYTCLLWLSTSGLWTIQA), serve as a signal peptide directing secretion. N-linked (GlcNAc...) asparagine glycans are attached at residues N119, N175, and N243. Cortisol is bound at residue Q253. An N-linked (GlcNAc...) asparagine glycan is attached at N259. Q285 contributes to the cortisol binding site. N-linked (GlcNAc...) asparagine glycosylation occurs at N326. Residue W392 participates in cortisol binding.

This sequence belongs to the serpin family. In terms of tissue distribution, expressed by the liver; secreted in plasma.

It localises to the secreted. Major transport protein for glucocorticoids and progestins in the blood of almost all vertebrate species. This Ovis aries (Sheep) protein is Corticosteroid-binding globulin (SERPINA6).